Consider the following 205-residue polypeptide: Ras-related and estrogen-regulated growth inhibitor-like protein (205 aa).

Residues 1–205 (MSNFLHLKYN…NVFGKRRKSV (205 aa)) form a small GTPase-like region. Residues 11-18 (EKSVSVTK), 58-64 (DPCSQTQ), and 123-126 (NKRD) each bind GTP.

The protein belongs to the small GTPase superfamily. Ras family.

The enzyme catalyses GTP + H2O = GDP + phosphate + H(+). In terms of biological role, binds GDP/GTP and may possess intrinsic GTPase activity. The protein is Ras-related and estrogen-regulated growth inhibitor-like protein (RERGL) of Homo sapiens (Human).